We begin with the raw amino-acid sequence, 491 residues long: Probable allantoate deiminase (491 aa).

The N-terminal stretch at 1–32 is a signal peptide; sequence MALLLSYPRRHPSIHLLILSAYALFLLPILDG. N109 carries an N-linked (GlcNAc...) asparagine glycan. Mn(2+) is bound by residues H120, D131, E168, and H234. N-linked (GlcNAc...) asparagine glycosylation is found at N265 and N343. H454 contributes to the Mn(2+) binding site.

The protein belongs to the peptidase M20A family. In terms of assembly, homodimer. It depends on Mn(2+) as a cofactor.

The protein localises to the endoplasmic reticulum. It catalyses the reaction allantoate + H2O + 2 H(+) = (S)-2-ureidoglycine + NH4(+) + CO2. Its function is as follows. Involved in the catabolism of purine nucleotides. The sequential activity of AAH, UGLYAH and UAH allows a complete purine breakdown without the intermediate generation of urea. The chain is Probable allantoate deiminase from Oryza sativa subsp. japonica (Rice).